A 113-amino-acid chain; its full sequence is Ribonuclease P protein component (113 aa).

It belongs to the RnpA family. As to quaternary structure, consists of a catalytic RNA component (M1 or rnpB) and a protein subunit.

The enzyme catalyses Endonucleolytic cleavage of RNA, removing 5'-extranucleotides from tRNA precursor.. RNaseP catalyzes the removal of the 5'-leader sequence from pre-tRNA to produce the mature 5'-terminus. It can also cleave other RNA substrates such as 4.5S RNA. The protein component plays an auxiliary but essential role in vivo by binding to the 5'-leader sequence and broadening the substrate specificity of the ribozyme. This Ligilactobacillus salivarius (strain UCC118) (Lactobacillus salivarius) protein is Ribonuclease P protein component.